The following is a 550-amino-acid chain: Glycosyltransferase-like protein gnt12 (550 aa).

Residues 1 to 29 (MSYLPLYNNNNNINNNNNNNNNRINNNKE) are disordered. Residues 1–36 (MSYLPLYNNNNNINNNNNNNNNRINNNKEKGVKNKP) are Cytoplasmic-facing. The span at 8–25 (NNNNNINNNNNNNNNRIN) shows a compositional bias: low complexity. The chain crosses the membrane as a helical; Signal-anchor for type II membrane protein span at residues 37–57 (FQIFISIVFIVFLCFFLIWSM). The Extracellular portion of the chain corresponds to 58-550 (EAKKDKNIKI…LFNEPLTNEC (493 aa)). A compositionally biased stretch (low complexity) spans 81 to 97 (LINEPINNNKNNKNNIP). The interval 81 to 100 (LINEPINNNKNNKNNIPKNH) is disordered. Asn-233, Asn-322, and Asn-426 each carry an N-linked (GlcNAc...) asparagine glycan.

This sequence belongs to the glycosyltransferase 8 family. Highly divergent.

The protein localises to the membrane. This is Glycosyltransferase-like protein gnt12 (gnt12) from Dictyostelium discoideum (Social amoeba).